A 462-amino-acid polypeptide reads, in one-letter code: Mitochondrial-processing peptidase subunit beta (462 aa).

The transit peptide at 1–20 directs the protein to the mitochondrion; sequence MFSRTASKFRNTRRLLSTIS. H70 provides a ligand contact to Zn(2+). The active-site Proton acceptor is E73. H74 and E150 together coordinate Zn(2+). S243 bears the Phosphoserine mark.

The protein belongs to the peptidase M16 family. In terms of assembly, heterodimer of MAS2 (alpha) and MAS1 (beta) subunits, forming the mitochondrial processing protease (MPP) in which MAS2 is involved in substrate recognition and binding and MAS1 is the catalytic subunit. Zn(2+) is required as a cofactor.

It is found in the mitochondrion matrix. The enzyme catalyses Release of N-terminal transit peptides from precursor proteins imported into the mitochondrion, typically with Arg in position P2.. Binding to MAS2 is required for catalytic activity. Inhibited by high levels (&gt; 1uM) of zinc. Inhibited by metal chelators ethylenediaminetetraacetic acid (EDTA) and O-phenanthroline. Functionally, catalytic subunit of the essential mitochondrial processing protease (MPP), which cleaves the mitochondrial sequence off newly imported precursors proteins. Preferentially, cleaves after an arginine at position P2. This Saccharomyces cerevisiae (strain ATCC 204508 / S288c) (Baker's yeast) protein is Mitochondrial-processing peptidase subunit beta.